The sequence spans 189 residues: Peptidyl-tRNA hydrolase (189 aa).

Tyr16 serves as a coordination point for tRNA. The active-site Proton acceptor is His21. Positions 67, 69, and 115 each coordinate tRNA.

Belongs to the PTH family. As to quaternary structure, monomer.

It localises to the cytoplasm. It catalyses the reaction an N-acyl-L-alpha-aminoacyl-tRNA + H2O = an N-acyl-L-amino acid + a tRNA + H(+). Hydrolyzes ribosome-free peptidyl-tRNAs (with 1 or more amino acids incorporated), which drop off the ribosome during protein synthesis, or as a result of ribosome stalling. Functionally, catalyzes the release of premature peptidyl moieties from peptidyl-tRNA molecules trapped in stalled 50S ribosomal subunits, and thus maintains levels of free tRNAs and 50S ribosomes. This chain is Peptidyl-tRNA hydrolase, found in Legionella pneumophila (strain Paris).